Here is a 408-residue protein sequence, read N- to C-terminus: CCA-adding enzyme (408 aa).

ATP-binding residues include glycine 8 and arginine 11. CTP contacts are provided by glycine 8 and arginine 11. The Mg(2+) site is built by glutamate 21 and aspartate 23. Positions 91, 137, and 140 each coordinate ATP. CTP-binding residues include arginine 91, arginine 137, and arginine 140. The 104-residue stretch at 226–329 (TGYYTMTTLS…MTLFHVFDCW (104 aa)) folds into the HD domain.

It belongs to the tRNA nucleotidyltransferase/poly(A) polymerase family. Bacterial CCA-adding enzyme type 2 subfamily. The cofactor is Mg(2+).

The catalysed reaction is a tRNA precursor + 2 CTP + ATP = a tRNA with a 3' CCA end + 3 diphosphate. It catalyses the reaction a tRNA with a 3' CCA end + 2 CTP + ATP = a tRNA with a 3' CCACCA end + 3 diphosphate. In terms of biological role, catalyzes the addition and repair of the essential 3'-terminal CCA sequence in tRNAs without using a nucleic acid template. Adds these three nucleotides in the order of C, C, and A to the tRNA nucleotide-73, using CTP and ATP as substrates and producing inorganic pyrophosphate. tRNA 3'-terminal CCA addition is required both for tRNA processing and repair. Also involved in tRNA surveillance by mediating tandem CCA addition to generate a CCACCA at the 3' terminus of unstable tRNAs. While stable tRNAs receive only 3'-terminal CCA, unstable tRNAs are marked with CCACCA and rapidly degraded. This is CCA-adding enzyme from Blochmanniella pennsylvanica (strain BPEN).